The chain runs to 291 residues: Elongation factor Ts (291 aa).

An involved in Mg(2+) ion dislocation from EF-Tu region spans residues 78–81 (TDFV).

The protein belongs to the EF-Ts family.

It is found in the cytoplasm. Associates with the EF-Tu.GDP complex and induces the exchange of GDP to GTP. It remains bound to the aminoacyl-tRNA.EF-Tu.GTP complex up to the GTP hydrolysis stage on the ribosome. The chain is Elongation factor Ts from Ureaplasma urealyticum serovar 10 (strain ATCC 33699 / Western).